The chain runs to 165 residues: Secreted acidic protein 2 (165 aa).

2 stretches are compositionally biased toward acidic residues: residues 1–58 and 80–102; these read WSXS…DDSG and ESSD…DAYN. Residues 1–112 form a disordered region; the sequence is WSXSGDDDDD…DDSQAGELNS (112 aa). Over residues 103–112 the composition is skewed to polar residues; the sequence is DDSQAGELNS.

In terms of tissue distribution, component of the acid-insoluble and acid-soluble organic matrix of the aragonitic skeleton (at protein level).

It localises to the secreted. This Acropora millepora (Staghorn coral) protein is Secreted acidic protein 2.